Here is a 260-residue protein sequence, read N- to C-terminus: 5'-nucleotidase SurE (260 aa).

Asp8, Asp9, Ser39, and Asn91 together coordinate a divalent metal cation.

This sequence belongs to the SurE nucleotidase family. It depends on a divalent metal cation as a cofactor.

The protein localises to the cytoplasm. It catalyses the reaction a ribonucleoside 5'-phosphate + H2O = a ribonucleoside + phosphate. In terms of biological role, nucleotidase that shows phosphatase activity on nucleoside 5'-monophosphates. The chain is 5'-nucleotidase SurE from Acidovorax ebreus (strain TPSY) (Diaphorobacter sp. (strain TPSY)).